Here is a 553-residue protein sequence, read N- to C-terminus: Phospholipase B (553 aa).

The first 35 residues, 1–35, serve as a signal peptide directing secretion; the sequence is MIRFGNPSSSDKRRQRCRSWYWGGLLLLWAVAETR. N-linked (GlcNAc...) asparagine glycosylation is found at N313, N416, and N531.

This sequence belongs to the phospholipase B-like family. Expressed by the venom gland.

It is found in the secreted. May cause hemolysis or may be involved in protein folding and translation. This chain is Phospholipase B, found in Crotalus adamanteus (Eastern diamondback rattlesnake).